A 269-amino-acid polypeptide reads, in one-letter code: MAARTRSLVERRRVLMAGVRSHTRFYKALAEEVREFHATKICGTLLTLLSGSLQGRSVFEATRVTLICEVDLGPRRPDCICVFEFANDKTLGGVCVIIELKTCKYISSGDTASKREQRATGMKQLRHSLKLLQSLAPPGDKIVYLCPVLVFVAQRTLRVSRVTRLVPQKVSGNITAVVRMLQSLSTYTVPIEPRTQRARRRRGGAARGSASRPKRSHSGARDPPESAARQLPPADQTPTSTEGGGVLKRIAALFCVPVATKTKPRAASE.

The tract at residues isoleucine 191–glycine 244 is disordered.

This sequence belongs to the herpesviridae UL24 family.

The protein localises to the virion. It is found in the host cytoplasm. It localises to the host nucleus. The protein resides in the host nucleolus. Its subcellular location is the host Golgi apparatus. May participate in nuclear egress of viral particles. Plays a role in the dispersal of several host nucleolar proteins including NCL/nucleolin and NPM1. Since deletion of host NCL/nucleolin negatively impact on nuclear egress, UL24 supposedly acts on this process through its effect on host nucleoli. The chain is Protein UL24 from Homo sapiens (Human).